Reading from the N-terminus, the 375-residue chain is Queuine tRNA-ribosyltransferase (375 aa).

The Proton acceptor role is filled by aspartate 89. Residues 89 to 93 (DSGGF), aspartate 143, glutamine 187, and glycine 214 contribute to the substrate site. The segment at 245–251 (GVGKPED) is RNA binding. The Nucleophile role is filled by aspartate 264. An RNA binding; important for wobble base 34 recognition region spans residues 269–273 (TRNAR). Zn(2+) is bound by residues cysteine 302, cysteine 304, cysteine 307, and histidine 333.

Belongs to the queuine tRNA-ribosyltransferase family. As to quaternary structure, homodimer. Within each dimer, one monomer is responsible for RNA recognition and catalysis, while the other monomer binds to the replacement base PreQ1. The cofactor is Zn(2+).

The catalysed reaction is 7-aminomethyl-7-carbaguanine + guanosine(34) in tRNA = 7-aminomethyl-7-carbaguanosine(34) in tRNA + guanine. It participates in tRNA modification; tRNA-queuosine biosynthesis. Functionally, catalyzes the base-exchange of a guanine (G) residue with the queuine precursor 7-aminomethyl-7-deazaguanine (PreQ1) at position 34 (anticodon wobble position) in tRNAs with GU(N) anticodons (tRNA-Asp, -Asn, -His and -Tyr). Catalysis occurs through a double-displacement mechanism. The nucleophile active site attacks the C1' of nucleotide 34 to detach the guanine base from the RNA, forming a covalent enzyme-RNA intermediate. The proton acceptor active site deprotonates the incoming PreQ1, allowing a nucleophilic attack on the C1' of the ribose to form the product. After dissociation, two additional enzymatic reactions on the tRNA convert PreQ1 to queuine (Q), resulting in the hypermodified nucleoside queuosine (7-(((4,5-cis-dihydroxy-2-cyclopenten-1-yl)amino)methyl)-7-deazaguanosine). This is Queuine tRNA-ribosyltransferase from Salmonella paratyphi A (strain ATCC 9150 / SARB42).